A 179-amino-acid polypeptide reads, in one-letter code: uncharacterized protein (179 aa).

Polar residues-rich tracts occupy residues 1–37 (PLGAATSNIPPQYARSTLQPTGLTSRAQSYPTNTNPG) and 60–70 (IPTQSTTTFRS). Disordered stretches follow at residues 1-41 (PLGA…PSAK) and 60-82 (IPTQSTTTFRSNPPLPPVVPGRR).

Component of the acid-soluble and acid-insoluble organic matrix of calcified shell layers (at protein level).

It is found in the secreted. This is an uncharacterized protein from Haliotis asinina (Donkey's ear abalone).